The chain runs to 140 residues: Nucleoside diphosphate kinase (140 aa).

ATP-binding residues include lysine 10, phenylalanine 58, arginine 86, threonine 92, arginine 103, and asparagine 113. The Pros-phosphohistidine intermediate role is filled by histidine 116.

The protein belongs to the NDK family. Homotetramer. Requires Mg(2+) as cofactor.

The protein localises to the cytoplasm. It carries out the reaction a 2'-deoxyribonucleoside 5'-diphosphate + ATP = a 2'-deoxyribonucleoside 5'-triphosphate + ADP. The catalysed reaction is a ribonucleoside 5'-diphosphate + ATP = a ribonucleoside 5'-triphosphate + ADP. Major role in the synthesis of nucleoside triphosphates other than ATP. The ATP gamma phosphate is transferred to the NDP beta phosphate via a ping-pong mechanism, using a phosphorylated active-site intermediate. The chain is Nucleoside diphosphate kinase from Haemophilus influenzae (strain PittEE).